The chain runs to 298 residues: Acetylglutamate kinase (298 aa).

Substrate contacts are provided by residues 67 to 68 (GG), arginine 89, and asparagine 193.

This sequence belongs to the acetylglutamate kinase family. ArgB subfamily.

The protein resides in the cytoplasm. The enzyme catalyses N-acetyl-L-glutamate + ATP = N-acetyl-L-glutamyl 5-phosphate + ADP. The protein operates within amino-acid biosynthesis; L-arginine biosynthesis; N(2)-acetyl-L-ornithine from L-glutamate: step 2/4. Functionally, catalyzes the ATP-dependent phosphorylation of N-acetyl-L-glutamate. This chain is Acetylglutamate kinase, found in Desulfitobacterium hafniense (strain DSM 10664 / DCB-2).